The primary structure comprises 311 residues: tRNA pseudouridine synthase B (311 aa).

The active-site Nucleophile is Asp49.

The protein belongs to the pseudouridine synthase TruB family. Type 1 subfamily.

The enzyme catalyses uridine(55) in tRNA = pseudouridine(55) in tRNA. Functionally, responsible for synthesis of pseudouridine from uracil-55 in the psi GC loop of transfer RNAs. This chain is tRNA pseudouridine synthase B, found in Rhizobium meliloti (strain 1021) (Ensifer meliloti).